A 793-amino-acid polypeptide reads, in one-letter code: MSNESTNCSFFLNLFMLLLLLIFYSADACQRECGGISIPYPFGIGKDCCLEKYYEIECRNTTSRKLVPLLSFINKEVVSISLPSADSHFAYEVSDQERHESFGLVRVKFPITSAGCFNDGKESGGGSKMNFTGSPFFIDRSNSLIAAGCNSKVSLMYIKPKMVGCELSCNTSKDSYSNSIPFVEAGCSSNVLPYSQDQGCPEEIAEETGCNGIGCCQASLPNEPQQVIGIRTENNDGNSTTKVECTVSAFLTDEIYALPKATKTEHLLAKRYATVSLGWVIQTSNRSFLDSLALACKDREDYRNTTNLERKCTCGRITISETSYANCGCTYGYTGNPYVLNGCKDIDECKVKFEYCGKTETCVNFEGGYRCVRDKTKAIMIGAGTGFGVLVLVGGLWWLRKFLIKRRITKRKKKFFKRNGGLLLLQELNTREGYVEKTRVFNSRELEKATENFSENRVLGHGGQGTVYKGMLVDGRTVAVKKSKVIDEDKLQEFINEVVILSQINHRHVVKLLGCCLETEVPMLVYEFIINGNLFKHIHEEESDDYTMLWGMRLRIAVDIAGALSYLHSSASSPIYHRDIKSTNILLDEKYRAKVADFGTSRSVTIDQTHWTTVISGTVGYVDPEYYQSSQYTEKSDVYSFGVILAELITGDKPVIMVQNTQEIVALAEHFRVAMKEKRLTDIIDARIRNDCKPEQVMAVAKVAMKCLSSKGKKRPNMREVFTELERICTSPEDSQVHNRIDEEEEEEEEEEEVVTTINRGDSWSISVTAPALSIVASSPSSDVEPLFPRLTW.

The N-terminal stretch at 1–28 (MSNESTNCSFFLNLFMLLLLLIFYSADA) is a signal peptide. Residues 29-378 (CQRECGGISI…YRCVRDKTKA (350 aa)) are Extracellular-facing. N-linked (GlcNAc...) asparagine glycosylation is found at Asn60, Asn130, Asn170, Asn238, Asn285, and Asn304. Positions 312–371 (CTCGRITISETSYANCGCTYGYTGNPYVLNGCKDIDECKVKFEYCGKTETCVNFEGGYRC) are atypical EGF-like. Cystine bridges form between Cys314–Cys327, Cys349–Cys362, and Cys356–Cys371. The chain crosses the membrane as a helical span at residues 379–399 (IMIGAGTGFGVLVLVGGLWWL). The Cytoplasmic portion of the chain corresponds to 400–793 (RKFLIKRRIT…VEPLFPRLTW (394 aa)). The Protein kinase domain maps to 453–728 (FSENRVLGHG…REVFTELERI (276 aa)). Residues 459–467 (LGHGGQGTV) and Lys481 contribute to the ATP site. Tyr526 carries the post-translational modification Phosphotyrosine. Residue Asp579 is the Proton acceptor of the active site. Phosphothreonine occurs at positions 613 and 618. The residue at position 626 (Tyr626) is a Phosphotyrosine. Residues 733-757 (EDSQVHNRIDEEEEEEEEEEEVVTT) are disordered. The segment covering 742–754 (DEEEEEEEEEEEV) has biased composition (acidic residues).

The protein belongs to the protein kinase superfamily. Ser/Thr protein kinase family.

It localises to the membrane. It catalyses the reaction L-seryl-[protein] + ATP = O-phospho-L-seryl-[protein] + ADP + H(+). The catalysed reaction is L-threonyl-[protein] + ATP = O-phospho-L-threonyl-[protein] + ADP + H(+). In terms of biological role, serine/threonine-protein kinase that may function as a signaling receptor of extracellular matrix component. The protein is Wall-associated receptor kinase-like 18 (WAKL18) of Arabidopsis thaliana (Mouse-ear cress).